A 207-amino-acid polypeptide reads, in one-letter code: Adenylyl-sulfate kinase (207 aa).

39-46 (GLSGAGKS) contacts ATP. The active-site Phosphoserine intermediate is S113.

It belongs to the APS kinase family.

It carries out the reaction adenosine 5'-phosphosulfate + ATP = 3'-phosphoadenylyl sulfate + ADP + H(+). The protein operates within sulfur metabolism; hydrogen sulfide biosynthesis; sulfite from sulfate: step 2/3. Functionally, catalyzes the synthesis of activated sulfate. The protein is Adenylyl-sulfate kinase of Vibrio vulnificus (strain CMCP6).